A 446-amino-acid chain; its full sequence is 3-phosphoshikimate 1-carboxyvinyltransferase (446 aa).

The interval 1–20 (MIMAKPLSSRRAAPLAGSAP) is disordered. 3-phosphoshikimate is bound by residues K25, S26, and R30. K25 provides a ligand contact to phosphoenolpyruvate. Phosphoenolpyruvate is bound by residues G98 and R126. 4 residues coordinate 3-phosphoshikimate: S171, Q173, D324, and K351. Residue Q173 coordinates phosphoenolpyruvate. D324 (proton acceptor) is an active-site residue. R355 and R399 together coordinate phosphoenolpyruvate.

It belongs to the EPSP synthase family. As to quaternary structure, monomer.

It localises to the cytoplasm. The catalysed reaction is 3-phosphoshikimate + phosphoenolpyruvate = 5-O-(1-carboxyvinyl)-3-phosphoshikimate + phosphate. It functions in the pathway metabolic intermediate biosynthesis; chorismate biosynthesis; chorismate from D-erythrose 4-phosphate and phosphoenolpyruvate: step 6/7. Functionally, catalyzes the transfer of the enolpyruvyl moiety of phosphoenolpyruvate (PEP) to the 5-hydroxyl of shikimate-3-phosphate (S3P) to produce enolpyruvyl shikimate-3-phosphate and inorganic phosphate. This Paramagnetospirillum magneticum (strain ATCC 700264 / AMB-1) (Magnetospirillum magneticum) protein is 3-phosphoshikimate 1-carboxyvinyltransferase.